Reading from the N-terminus, the 243-residue chain is UPF0758 protein Tery_2667 (243 aa).

Residues V113–L235 form the MPN domain. Zn(2+) contacts are provided by H184, H186, and D197. Residues H184–D197 carry the JAMM motif motif.

It belongs to the UPF0758 family.

The sequence is that of UPF0758 protein Tery_2667 from Trichodesmium erythraeum (strain IMS101).